The primary structure comprises 174 residues: Chorion protein S18 (174 aa).

An N-terminal signal peptide occupies residues 1-17; sequence MMKFMCIFICAVAAVSA. Positions 154–165 are enriched in low complexity; the sequence is AAAASSSVAGVA. The disordered stretch occupies residues 154–174; that stretch reads AAAASSSVAGVAKKGYRKSSY.

It belongs to the chorion protein S15/S18 family.

It localises to the secreted. In terms of biological role, chorion membrane (egg shell) protein; plays a role in protecting the egg from the environment. The polypeptide is Chorion protein S18 (Cp18) (Drosophila subobscura (Fruit fly)).